The sequence spans 139 residues: Flagellar assembly factor FliW 2 (139 aa).

This sequence belongs to the FliW family. Interacts with translational regulator CsrA and flagellin(s).

The protein resides in the cytoplasm. Acts as an anti-CsrA protein, binds CsrA and prevents it from repressing translation of its target genes, one of which is flagellin. Binds to flagellin and participates in the assembly of the flagellum. This Helicobacter hepaticus (strain ATCC 51449 / 3B1) protein is Flagellar assembly factor FliW 2.